The chain runs to 114 residues: Ribonuclease P protein component (114 aa).

The protein belongs to the RnpA family. As to quaternary structure, consists of a catalytic RNA component (M1 or rnpB) and a protein subunit.

It carries out the reaction Endonucleolytic cleavage of RNA, removing 5'-extranucleotides from tRNA precursor.. Functionally, RNaseP catalyzes the removal of the 5'-leader sequence from pre-tRNA to produce the mature 5'-terminus. It can also cleave other RNA substrates such as 4.5S RNA. The protein component plays an auxiliary but essential role in vivo by binding to the 5'-leader sequence and broadening the substrate specificity of the ribozyme. The polypeptide is Ribonuclease P protein component (Clostridioides difficile (strain 630) (Peptoclostridium difficile)).